We begin with the raw amino-acid sequence, 147 residues long: Large ribosomal subunit protein bL9 (147 aa).

It belongs to the bacterial ribosomal protein bL9 family.

Binds to the 23S rRNA. The sequence is that of Large ribosomal subunit protein bL9 from Bdellovibrio bacteriovorus (strain ATCC 15356 / DSM 50701 / NCIMB 9529 / HD100).